Reading from the N-terminus, the 1127-residue chain is uncharacterized protein (1127 aa).

The signal sequence occupies residues 1–26 (MRIHQRSAPCVPVLLFLFLPSAPLCA). Positions 533-600 (ETESLSPPAD…ASSSPSEMAV (68 aa)) are disordered. Composition is skewed to low complexity over residues 536-549 (SLSP…TPSP) and 583-599 (AGAS…SEMA). Residues 1076–1126 (SEDEKEYQRALQELQKGNKLVASAVVEQLLQKDRNKKSAKIQQLKKRIDAQ) are a coiled coil.

This is an uncharacterized protein from Treponema pallidum (strain Nichols).